Consider the following 175-residue polypeptide: Transcription factor E (175 aa).

The 86-residue stretch at 3–88 (ENPLIQQVLF…TWKPSLEKVP (86 aa)) folds into the HTH TFE/IIEalpha-type domain.

This sequence belongs to the TFE family. As to quaternary structure, monomer. Interaction with RNA polymerase subunits RpoF and RpoE is necessary for Tfe stimulatory transcription activity. Able to interact with Tbp and RNA polymerase in the absence of DNA promoter. Interacts both with the preinitiation and elongation complexes.

In terms of biological role, transcription factor that plays a role in the activation of archaeal genes transcribed by RNA polymerase. Facilitates transcription initiation by enhancing TATA-box recognition by TATA-box-binding protein (Tbp), and transcription factor B (Tfb) and RNA polymerase recruitment. Not absolutely required for transcription in vitro, but particularly important in cases where Tbp or Tfb function is not optimal. It dynamically alters the nucleic acid-binding properties of RNA polymerases by stabilizing the initiation complex and destabilizing elongation complexes. Seems to translocate with the RNA polymerase following initiation and acts by binding to the non template strand of the transcription bubble in elongation complexes. The protein is Transcription factor E of Methanococcus maripaludis (strain C7 / ATCC BAA-1331).